The primary structure comprises 548 residues: ATP synthase subunit alpha (548 aa).

172-179 is a binding site for ATP; it reads GDRKTGKT. The segment at 511-548 is disordered; it reads FETTSGESVVPDENVEAMSEDDVEKESVKVRKPAPKKK. Residues 523–534 show a composition bias toward acidic residues; it reads ENVEAMSEDDVE.

The protein belongs to the ATPase alpha/beta chains family. F-type ATPases have 2 components, CF(1) - the catalytic core - and CF(0) - the membrane proton channel. CF(1) has five subunits: alpha(3), beta(3), gamma(1), delta(1), epsilon(1). CF(0) has three main subunits: a(1), b(2) and c(9-12). The alpha and beta chains form an alternating ring which encloses part of the gamma chain. CF(1) is attached to CF(0) by a central stalk formed by the gamma and epsilon chains, while a peripheral stalk is formed by the delta and b chains.

It is found in the cell membrane. The catalysed reaction is ATP + H2O + 4 H(+)(in) = ADP + phosphate + 5 H(+)(out). Functionally, produces ATP from ADP in the presence of a proton gradient across the membrane. The alpha chain is a regulatory subunit. The sequence is that of ATP synthase subunit alpha from Mycobacterium sp. (strain JLS).